The chain runs to 152 residues: Small ribosomal subunit protein uS8m (152 aa).

Belongs to the universal ribosomal protein uS8 family.

Its subcellular location is the mitochondrion. The chain is Small ribosomal subunit protein uS8m (mrps8) from Dictyostelium discoideum (Social amoeba).